The sequence spans 131 residues: Lactose permease (131 aa).

The Cytoplasmic segment spans residues 1–13 (MKFSELAPRERHN). A helical membrane pass occupies residues 14–34 (FVYFLLFFFFYHFIMSAYFPF). The Periplasmic segment spans residues 35–50 (FPVWLADVNHLTKTET). The helical transmembrane segment at 51–71 (GIVFSSISLFAIIFQPVFGLM) threads the bilayer. Over 72–80 (SDKLGLRKH) the chain is Cytoplasmic. A helical transmembrane segment spans residues 81–101 (LLWTITVLLILFAPFFIFVFS). P102 is a topological domain (periplasmic). Residues 103 to 123 (LLQMNIIAGSLVGGIYLGIVF) form a helical membrane-spanning segment. Residues 124–131 (STAPGVGS) are Cytoplasmic-facing.

Belongs to the major facilitator superfamily. Oligosaccharide:H(+) symporter (OHS) (TC 2.A.1.5) family.

It is found in the cell inner membrane. It catalyses the reaction lactose(in) + H(+)(in) = lactose(out) + H(+)(out). Functionally, responsible for transport of beta-galactosides into the cell, with the concomitant import of a proton (symport system). In Klebsiella pneumoniae, this protein is Lactose permease (lacY).